A 757-amino-acid polypeptide reads, in one-letter code: Catalase-peroxidase (757 aa).

The segment at residues 101 to 248 (WHSAGTYRIG…LAAVQMGLIY (148 aa)) is a cross-link (tryptophyl-tyrosyl-methioninium (Trp-Tyr) (with M-274)). Histidine 102 acts as the Proton acceptor in catalysis. Residues 210–231 (SEGVHHPDEHSGAKEKASKNSD) are disordered. Residues 212-231 (GVHHPDEHSGAKEKASKNSD) are compositionally biased toward basic and acidic residues. Positions 248–274 (YVNPEGPDGRPDPLASARDIRETFARM) form a cross-link, tryptophyl-tyrosyl-methioninium (Tyr-Met) (with W-101). Histidine 289 contributes to the heme b binding site. Residues 293–312 (KTHGAAPADNVGPEPEAGEL) are disordered.

The protein belongs to the peroxidase family. Peroxidase/catalase subfamily. In terms of assembly, homodimer or homotetramer. Heme b serves as cofactor. In terms of processing, formation of the three residue Trp-Tyr-Met cross-link is important for the catalase, but not the peroxidase activity of the enzyme.

It carries out the reaction H2O2 + AH2 = A + 2 H2O. The catalysed reaction is 2 H2O2 = O2 + 2 H2O. Functionally, bifunctional enzyme with both catalase and broad-spectrum peroxidase activity. This Xylella fastidiosa (strain M12) protein is Catalase-peroxidase.